A 404-amino-acid polypeptide reads, in one-letter code: Exodeoxyribonuclease 7 large subunit (404 aa).

This sequence belongs to the XseA family. Heterooligomer composed of large and small subunits.

The protein resides in the cytoplasm. It catalyses the reaction Exonucleolytic cleavage in either 5'- to 3'- or 3'- to 5'-direction to yield nucleoside 5'-phosphates.. Bidirectionally degrades single-stranded DNA into large acid-insoluble oligonucleotides, which are then degraded further into small acid-soluble oligonucleotides. The sequence is that of Exodeoxyribonuclease 7 large subunit from Ruminiclostridium cellulolyticum (strain ATCC 35319 / DSM 5812 / JCM 6584 / H10) (Clostridium cellulolyticum).